Consider the following 195-residue polypeptide: MMTPQLILASTSVYRQALLRKLGLPFEYCDPNIDETPIANESAQALVLRLAQAKAEAGAKYFPDGLIIGSDQVAVIDSKIIGKPLNRDNAIQQLSQASGKTITFYTGLALYNAQTGEINAQVEPFTVHFRHLAASQISAYVDKEQPFYCAGSFKSEGLGIALFSRLEGRDPNTLVGLPLILLTEMLLSQGIDVLA.

D71 acts as the Proton acceptor in catalysis.

Belongs to the Maf family. YceF subfamily. The cofactor is a divalent metal cation.

It localises to the cytoplasm. The catalysed reaction is N(7)-methyl-GTP + H2O = N(7)-methyl-GMP + diphosphate + H(+). In terms of biological role, nucleoside triphosphate pyrophosphatase that hydrolyzes 7-methyl-GTP (m(7)GTP). May have a dual role in cell division arrest and in preventing the incorporation of modified nucleotides into cellular nucleic acids. The chain is 7-methyl-GTP pyrophosphatase from Shewanella oneidensis (strain ATCC 700550 / JCM 31522 / CIP 106686 / LMG 19005 / NCIMB 14063 / MR-1).